We begin with the raw amino-acid sequence, 551 residues long: MKIRHWSALSLFVLPALAQAEALTGEVHRQPLNIQAIVMFLLFVGGTLYITYWASKRTRSRQDYYTAGGRITGFQNGLAIAGDYMSAASFLGISALVYASGYDGLIYSIGFLIGWPIILFLIAERLRNLGRYTFADVASYRLQQRPIRTLSACGSLVVVALYLIAQMVGAGKLIQLLFGLNYHVAVVLVGILMVLYVLFGGMLATTWVQIIKAVMLLSGATFMAIMVMKSVNFNFNTLFSEAVKVHPKGLSIMSPGGLVSDPISALSLGLALMFGTAGLPHILMRFFTVSDAKEARKSVFYATGFIGYFYILTFIIGFGAILLVGPNQTFKDAAGALLGGNNMAAVHLANAVGGSFFLGFISAVAFATILAVVAGLTLAGASAVSHDLYASVIKKGKANERDELRVSKITVIILGIVAIGLGILFENQNIAFMVGLAFSIAASCNFPIIIISMYWDKLTTRGAMIGGWLGLSTAVILMILGPTIWVTILGHEKPIYPYEYPALFSMIAAFVGTWFFSITDNSETGKQERLLFKSQFVRSQTGLGASKGGAH.

Helical transmembrane passes span 5–25 (HWSA…ALTG), 34–54 (IQAI…TYWA), 77–97 (GLAI…SALV), 104–124 (GLIY…LIAE), 150–170 (LSAC…MVGA), 184–204 (VAVV…GMLA), 207–227 (WVQI…AIMV), 263–283 (ISAL…PHIL), 304–324 (GFIG…ILLV), 356–376 (FFLG…VAGL), 406–426 (VSKI…ILFE), 430–450 (IAFM…PIII), 469–489 (LGLS…VTIL), and 498–518 (YEYP…FFSI).

This sequence belongs to the sodium:solute symporter (SSF) (TC 2.A.21) family.

The protein localises to the cell inner membrane. Functionally, transports acetate. The polypeptide is Cation/acetate symporter ActP (Yersinia pestis bv. Antiqua (strain Antiqua)).